Consider the following 338-residue polypeptide: L-serine dehydratase (338 aa).

Lys39 bears the N6-(pyridoxal phosphate)lysine mark.

The protein belongs to the serine/threonine dehydratase family. Requires pyridoxal 5'-phosphate as cofactor.

Its subcellular location is the cytoplasm. It catalyses the reaction L-serine = pyruvate + NH4(+). Its pathway is carbohydrate biosynthesis; gluconeogenesis. In Saccharomyces cerevisiae (strain RM11-1a) (Baker's yeast), this protein is L-serine dehydratase (SDL1).